Here is a 244-residue protein sequence, read N- to C-terminus: Derlin-2.1 (244 aa).

Residues Met1–Thr21 are Cytoplasmic-facing. A helical membrane pass occupies residues Ala22–Leu42. Residues Asn43–Phe96 are Lumenal-facing. A helical membrane pass occupies residues Leu97–Ile117. At Pro118 to Ser121 the chain is on the cytoplasmic side. The helical transmembrane segment at Val122 to Trp142 threads the bilayer. At Ser143–Ser152 the chain is on the lumenal side. Residues Phe153–Ile173 form a helical membrane-spanning segment. The Cytoplasmic segment spans residues Leu174–Asp244.

This sequence belongs to the derlin family.

The protein resides in the endoplasmic reticulum membrane. Functionally, may be involved in the degradation process of specific misfolded endoplasmic reticulum (ER) luminal proteins. This Arabidopsis thaliana (Mouse-ear cress) protein is Derlin-2.1 (DER2.1).